A 140-amino-acid chain; its full sequence is Ribosomal RNA large subunit methyltransferase H (140 aa).

S-adenosyl-L-methionine-binding residues include leucine 55 and glycine 87.

This sequence belongs to the RNA methyltransferase RlmH family. Homodimer.

It localises to the cytoplasm. The enzyme catalyses pseudouridine(1915) in 23S rRNA + S-adenosyl-L-methionine = N(3)-methylpseudouridine(1915) in 23S rRNA + S-adenosyl-L-homocysteine + H(+). In terms of biological role, specifically methylates the pseudouridine at position 1915 (m3Psi1915) in 23S rRNA. The sequence is that of Ribosomal RNA large subunit methyltransferase H from Rhizorhabdus wittichii (strain DSM 6014 / CCUG 31198 / JCM 15750 / NBRC 105917 / EY 4224 / RW1) (Sphingomonas wittichii).